The following is a 94-amino-acid chain: Cystatin-A1 (94 aa).

A Secondary area of contact motif is present at residues 45 to 49 (QLVAG).

It belongs to the cystatin family.

The protein localises to the cytoplasm. In terms of biological role, intracellular thiol proteinase inhibitor. Inhibits papain, but not cathepsin B. This chain is Cystatin-A1 (cpiA), found in Dictyostelium discoideum (Social amoeba).